The following is a 176-amino-acid chain: Large ribosomal subunit protein uL6 (176 aa).

The protein belongs to the universal ribosomal protein uL6 family. As to quaternary structure, part of the 50S ribosomal subunit.

This protein binds to the 23S rRNA, and is important in its secondary structure. It is located near the subunit interface in the base of the L7/L12 stalk, and near the tRNA binding site of the peptidyltransferase center. The sequence is that of Large ribosomal subunit protein uL6 from Lactobacillus helveticus (strain DPC 4571).